The primary structure comprises 212 residues: ATP phosphoribosyltransferase (212 aa).

The protein belongs to the ATP phosphoribosyltransferase family. Short subfamily. As to quaternary structure, heteromultimer composed of HisG and HisZ subunits.

Its subcellular location is the cytoplasm. It carries out the reaction 1-(5-phospho-beta-D-ribosyl)-ATP + diphosphate = 5-phospho-alpha-D-ribose 1-diphosphate + ATP. It functions in the pathway amino-acid biosynthesis; L-histidine biosynthesis; L-histidine from 5-phospho-alpha-D-ribose 1-diphosphate: step 1/9. In terms of biological role, catalyzes the condensation of ATP and 5-phosphoribose 1-diphosphate to form N'-(5'-phosphoribosyl)-ATP (PR-ATP). Has a crucial role in the pathway because the rate of histidine biosynthesis seems to be controlled primarily by regulation of HisG enzymatic activity. The sequence is that of ATP phosphoribosyltransferase from Prochlorococcus marinus (strain AS9601).